A 612-amino-acid chain; its full sequence is Baculoviral IAP repeat-containing protein 2 (612 aa).

The stretch at 46–113 (ELYRMSTYSA…RQFYPSCSFV (68 aa)) is one BIR 1 repeat. Arginine 143 carries the omega-N-methylarginine modification. Serine 153 carries the post-translational modification Phosphoserine. 2 BIR repeats span residues 177-243 (EEAR…CPFL) and 262-329 (HSAR…CEFL). Residues cysteine 299, cysteine 302, histidine 319, and cysteine 326 each contribute to the Zn(2+) site. One can recognise a CARD domain in the interval 447–537 (MASGDLSLIR…TLYENLFVEK (91 aa)). Residues 565 to 600 (CKVCMDREVSIVFIPCGHLVVCQECAPSLRKCPICR) form an RING-type zinc finger.

This sequence belongs to the IAP family. In terms of assembly, interacts with DIABLO/SMAC and with PRSS25; these interactions inhibit apoptotic suppressor activity. Interacts with CASP9. Interacts (via BIR domains) with TRAF2; the interaction is required for IKBKE ubiquitination. Interacts with E2F1, RIPK1, RIPK2, RIPK3, RIPK4, BIRC5/survivin and USP19. Interacts with HSP90AB1. Interacts with several death receptors, inclusing FAS, TNFRSF10A and TNFRSF10B. Recruited to TNFRSF10B in the absence of receptor stimulation. When TNFRSF10B is stimulated, further recruited to the receptor and cleaved by caspases. Proteolytic fragments remain associated with TNFRSF10B. In terms of processing, auto-ubiquitinated and degraded by the proteasome in apoptotic cells. Upon stimulation of death receptors, including TNFRSF10B, recruited to receptors and cleaved by caspases. Proteolytic fragments remain associated with the receptors. This cleavage presumably inactivates the protein. As to expression, expressed in heart, brain, spleen, lung, liver, skeletal muscle, kidney and testis.

It is found in the cytoplasm. Its subcellular location is the nucleus. It catalyses the reaction S-ubiquitinyl-[E2 ubiquitin-conjugating enzyme]-L-cysteine + [acceptor protein]-L-lysine = [E2 ubiquitin-conjugating enzyme]-L-cysteine + N(6)-ubiquitinyl-[acceptor protein]-L-lysine.. Its activity is regulated as follows. The CARD domain inhibits the activation of E3 ubiquitin ligase activity by preventing RING domain dimerization and E2 ubiquitin donor binding and activation. The CARD domain-mediated autoinhibition of the E3 ubiquitin-protein ligase activity suppresses cell proliferation and migration. USP19 regulates the stability of BIRC2/c-IAP1 by preventing its ubiquitination. In terms of biological role, multi-functional protein which regulates not only caspases and apoptosis, but also modulates inflammatory signaling and immunity, mitogenic kinase signaling, and cell proliferation, as well as cell invasion and metastasis. Acts as an E3 ubiquitin-protein ligase regulating NF-kappa-B signaling and regulates both canonical and non-canonical NF-kappa-B signaling by acting in opposite directions: acts as a positive regulator of the canonical pathway and suppresses constitutive activation of non-canonical NF-kappa-B signaling. The target proteins for its E3 ubiquitin-protein ligase activity include: RIPK1, RIPK2, RIPK3, RIPK4, CASP3, CASP7, CASP8, TRAF2, DIABLO/SMAC, MAP3K14/NIK, MAP3K5/ASK1, IKBKG/NEMO, IKBKE and MXD1/MAD1. Can also function as an E3 ubiquitin-protein ligase of the NEDD8 conjugation pathway, targeting effector caspases for neddylation and inactivation. Acts as an important regulator of innate immune signaling via regulation of Toll-like receptors (TLRs), Nodlike receptors (NLRs) and RIG-I like receptors (RLRs), collectively referred to as pattern recognition receptors (PRRs). Protects cells from spontaneous formation of the ripoptosome, a large multi-protein complex that has the capability to kill cancer cells in a caspase-dependent and caspase-independent manner. Suppresses ripoptosome formation by ubiquitinating RIPK1 and CASP8. Can stimulate the transcriptional activity of E2F1. Plays a role in the modulation of the cell cycle. In Mus musculus (Mouse), this protein is Baculoviral IAP repeat-containing protein 2 (Birc2).